A 406-amino-acid polypeptide reads, in one-letter code: Putative competence-damage inducible protein (406 aa).

The protein belongs to the CinA family.

In Natranaerobius thermophilus (strain ATCC BAA-1301 / DSM 18059 / JW/NM-WN-LF), this protein is Putative competence-damage inducible protein.